The sequence spans 5538 residues: Leashin (5538 aa).

Residues 1 to 10 (MFRALMGGGR) are compositionally biased toward gly residues. 22 disordered regions span residues 1–270 (MFRA…SSMG), 286–315 (EVDPAPGRPDRPTAGTTSEPPKPSNTTFGI), 331–365 (LPLPASPTSPPEPVPTTAPYAPPVTSSTTKPPHTH), 510–555 (SRDA…KKSS), 596–712 (TESV…DISQ), 800–901 (AATS…FPTG), 913–944 (ALASTQDRDSRLPRQHASSSSGSLQHVAPVPT), 1027–1145 (NRPH…KDSF), 1164–1297 (VLSG…GYRD), 1310–1398 (PTPP…RYVS), 1432–1993 (EDPT…TSVE), 2067–2146 (SELL…VNAF), 2165–2207 (NRLS…SPPA), 2233–3065 (PEAA…SQPI), 3077–3894 (MAEE…EIVS), 3910–4034 (EEKA…DTGL), 4072–4128 (KFKQ…EEPL), 4238–4421 (EAAL…SNQA), 4442–4463 (PRPLEVEPAASEVYQGATDEND), 4509–4698 (LRRQ…TSNT), 4733–4850 (KTDG…VEQA), and 4910–5052 (ALTV…RHRR). Residues 1–1100 (MFRALMGGGR…RASGVQLIDR (1100 aa)) form a woronin bodies-binding region region. Positions 14-23 (SRSTTSSSKS) are enriched in low complexity. Basic and acidic residues-rich tracts occupy residues 42 to 51 (SRGDDRDRGL) and 89 to 167 (VEHD…ERSR). A compositionally biased stretch (polar residues) spans 299-313 (AGTTSEPPKPSNTTF). The span at 334-352 (PASPTSPPEPVPTTAPYAP) shows a compositional bias: pro residues. Basic residues predominate over residues 514-523 (PRKHHYRQRR). Residues 598–607 (SVSTARRSQT) are compositionally biased toward polar residues. The span at 639–655 (HRSRSRSHSSSRNRRHS) shows a compositional bias: basic residues. Residues 660–674 (AAVGAAVGSGAIALA) are compositionally biased toward low complexity. Residues 682–698 (SRSRSRSRFPRKSKGRK) show a composition bias toward basic residues. The span at 809-825 (RAGEILVAKETRSRHSD) shows a compositional bias: basic and acidic residues. Composition is skewed to low complexity over residues 842–851 (GDQSSSSVSS) and 862–880 (GSDESQSSDSGTSKWGWRW). Positions 881 to 891 (GSKKNKKKKRA) are enriched in basic residues. Basic and acidic residues-rich tracts occupy residues 1068–1091 (LTKEQADKERRMDRLEQLKRDAER), 1098–1145 (IDRD…KDSF), 1178–1198 (SQRRHEERRQQRRAERRRGSE), 1207–1226 (SKSERAQETTDYLPEERQPE), 1356–1365 (WGEHKTHEYE), 1375–1387 (SVDHETTREREQP), 1447–1462 (GRVEYRDPWVETESKS), and 1478–1488 (EEKAPSSRVIE). Residues 1506-1516 (QESSEPQTRTS) show a composition bias toward low complexity. Composition is skewed to basic and acidic residues over residues 1521-1536 (VIDRLSEKQDERDGSR), 1549-1559 (GKERDESELRA), and 1572-1594 (EELRSDPKRDVDSRDDGDVDRRS). Over residues 1639–1648 (KKKRRKRRSK) the composition is skewed to basic residues. Composition is skewed to basic and acidic residues over residues 1672–1686 (EKLKSMDDKDKEKKA), 1700–1773 (EPVD…QRRE), and 1788–1800 (KSGEYEKDRKLSE). Composition is skewed to low complexity over residues 1867 to 1876 (PAPRSRSRPA) and 1889 to 1898 (SQSSRRSSIL). Positions 1950–1975 (KNSREMRPLWLVERHGPGHGEHKLEE) are enriched in basic and acidic residues. 2 stretches are compositionally biased toward polar residues: residues 1984–1993 (KTSSANTSVE) and 2121–2130 (TPQNNVTAAS). Basic and acidic residues-rich tracts occupy residues 2187–2196 (DADRTHKPIA), 2269–2279 (VPRDDKRRDSV), and 2307–2320 (GENKELPSEAKNEN). The span at 2321–2331 (ANDNSQAQTEQ) shows a compositional bias: polar residues. A compositionally biased stretch (basic residues) spans 2344–2355 (AKKKKKKNKKKR). A compositionally biased stretch (polar residues) spans 2358–2370 (MDSNTQEPTTPVD). Positions 2427 to 2441 (DVEKAIEAPDVRKEL) are enriched in basic and acidic residues. Residues 2449–2461 (APEDTPAEPTAET) show a composition bias toward low complexity. Positions 2473 to 2484 (KKSKKKKKKKNK) are enriched in basic residues. The span at 2494–2525 (DPASTETPEASAANSQVVAAEQVESTLETTQP) shows a compositional bias: polar residues. 3 stretches are compositionally biased toward basic and acidic residues: residues 2580 to 2590 (NQAKELPHPEE), 2647 to 2661 (PEDKNGEAEQADLKS), and 2677 to 2691 (ALDKELSEISERPAE). Positions 2719–2734 (EEPTPTAAELETPLSR) are enriched in low complexity. Positions 2735–2747 (KNSKKNKKKNKRK) are enriched in basic residues. A compositionally biased stretch (basic and acidic residues) spans 2796–2812 (DENKGESRDVQAVKEET). The segment covering 2874–2884 (KKKAKKKKNRK) has biased composition (basic residues). Polar residues predominate over residues 2885–2894 (TANVSESQPE). Basic residues-rich tracts occupy residues 3003–3013 (KKSKKNKKKKQ) and 3089–3100 (KKTKKEKKKKRQ). A compositionally biased stretch (basic and acidic residues) spans 3145–3172 (AIEHAEAAAEHSQEQPNKDVTLHADHSP). Residues 3248–3268 (PAMEGGAAAEELVAVEPDVLE) show a composition bias toward low complexity. Over residues 3293–3303 (ELVNAETTQKT) the composition is skewed to polar residues. Positions 3329–3341 (SKKKDKKKKKKRQ) are enriched in basic residues. A compositionally biased stretch (basic and acidic residues) spans 3347 to 3367 (DEQRSSTKEEPTAEFSSDHVP). Composition is skewed to low complexity over residues 3397-3409 (TQTAAEPTPSSAS) and 3422-3435 (ESTQEPAAEEAQTA). Residues 3436 to 3450 (KSKKKAKKDKKKRKS) show a composition bias toward basic residues. Over residues 3480–3495 (EGPKPGDKPTSPKDSS) the composition is skewed to basic and acidic residues. Low complexity predominate over residues 3547–3564 (EEQAVVEETVAPPVVDEA). 2 stretches are compositionally biased toward polar residues: residues 3565–3580 (SQLQEQKVSSETLWSE) and 3604–3613 (VSPSLENNEG). Composition is skewed to basic residues over residues 3642 to 3652 (KSKKNKKKKKR) and 3716 to 3730 (KAKKKAKKKDKKRQS). Positions 3768–3787 (TFSQETSETISTEAKSSEPS) are enriched in polar residues. A compositionally biased stretch (basic and acidic residues) spans 3800 to 3819 (KENQSHDTEPHGGNDKDLTW). Over residues 3823–3837 (MVSSQVEQQQGTPSD) the composition is skewed to polar residues. Basic and acidic residues predominate over residues 3876–3893 (DRLERSGEEGTRVKKEIV). 2 stretches are compositionally biased toward polar residues: residues 3915 to 3925 (ISSQGEDTIQV) and 3965 to 3980 (KDQFTSIEVNDPSQSK). Positions 4010–4020 (TSQDDSVDAVQ) are enriched in acidic residues. The segment covering 4111-4123 (ESRENKFKEKQLA) has biased composition (basic and acidic residues). Basic residues predominate over residues 4244–4255 (KNSKKKSKKAKK). A compositionally biased stretch (polar residues) spans 4328–4345 (LGQTPNMDNQTDDVQSTE). The segment covering 4378-4391 (KLSKKDRRKAKKKS) has biased composition (basic residues). Residues 4392–4406 (AKDAIEPSDEPELRN) show a composition bias toward basic and acidic residues. The interval 4495-5538 (AIAEFDETAI…SSTMDISNVI (1044 aa)) is septal pore-binding region. Over residues 4554 to 4570 (TEQSAGLQAKSVSSQGA) the composition is skewed to polar residues. 2 stretches are compositionally biased toward basic and acidic residues: residues 4574-4591 (IQDDMQHPENRLARDQTK) and 4660-4673 (EESHLQSQQDEKGP). Positions 4940-4954 (SSVSSVKSVQSTHSV) are enriched in low complexity. Over residues 4966–4988 (RNTSGDLRAASQAQESHGTQPHA) the composition is skewed to polar residues. The span at 4989–4998 (TPQPPQPPPS) shows a compositional bias: pro residues. Positions 5050–5223 (HRRSMQHLQE…QQQIAASLHD (174 aa)) form a coiled coil.

In terms of assembly, binds directly or indirectly to the Woronin body major protein hexA.

The protein resides in the cell septum. Acts as the tether and is essential for anchoring of Woronin bodies at the septal pore. In damaged hyphae, Woronin bodies occlude septal pores in order to separate intact from damaged compartments. In Aspergillus fumigatus (strain ATCC MYA-4609 / CBS 101355 / FGSC A1100 / Af293) (Neosartorya fumigata), this protein is Leashin.